Here is a 191-residue protein sequence, read N- to C-terminus: uncharacterized protein (191 aa).

An HTH tetR-type domain is found at 3–63 (IDRKKLILEA…EIFTTLLKEM (61 aa)). A DNA-binding region (H-T-H motif) is located at residues 26–45 (TMDLVAKLANVGKGTIYTFF).

This is an uncharacterized protein from Bacillus subtilis (strain 168).